Here is a 354-residue protein sequence, read N- to C-terminus: DNA polymerase IV (354 aa).

The region spanning isoleucine 6–glycine 187 is the UmuC domain. Mg(2+) is bound by residues aspartate 10 and aspartate 105. The active site involves glutamate 106.

The protein belongs to the DNA polymerase type-Y family. As to quaternary structure, monomer. Mg(2+) serves as cofactor.

It localises to the cytoplasm. It carries out the reaction DNA(n) + a 2'-deoxyribonucleoside 5'-triphosphate = DNA(n+1) + diphosphate. Its function is as follows. Poorly processive, error-prone DNA polymerase involved in untargeted mutagenesis. Copies undamaged DNA at stalled replication forks, which arise in vivo from mismatched or misaligned primer ends. These misaligned primers can be extended by PolIV. Exhibits no 3'-5' exonuclease (proofreading) activity. May be involved in translesional synthesis, in conjunction with the beta clamp from PolIII. The protein is DNA polymerase IV of Pseudomonas syringae pv. syringae (strain B728a).